The chain runs to 159 residues: Fimbrial protein MyfA (159 aa).

The first 29 residues, 1 to 29 (MNMKKFVKKPLAIAVLMLASGGMVNMVHA), serve as a signal peptide directing secretion.

As to quaternary structure, forms a homomer composed of subunits assembled in a large structure resistant to proteases and chaotropic agents.

It is found in the fimbrium. In terms of biological role, major pilus subunit. Expressed only in pathogenic serotypes, it is part of myf, a probable virulence factor. The sequence is that of Fimbrial protein MyfA (myfA) from Yersinia enterocolitica.